Consider the following 221-residue polypeptide: GTP-binding nuclear protein Ran-A1 (221 aa).

Positions 10–174 (DYPSFKLVIV…LYLARKLAGD (165 aa)) constitute a Small GTPase Ran-type domain. Residue 21 to 28 (DGGTGKTT) coordinates GTP. The switch-I stretch occupies residues 40 to 48 (KKYEPTIGV). Residues Gly-71, 125–128 (NKVD), and 153–155 (SAK) each bind GTP. A switch-II region spans residues 71-87 (GQEKFGGLRDGYYIHGQ). Residues 199-208 (QHEAELAAAA) are compositionally biased toward low complexity. The segment at 199–221 (QHEAELAAAASQPLPDDDDETFD) is disordered.

This sequence belongs to the small GTPase superfamily. Ran family. In terms of assembly, found in a nuclear export complex with RanGTP, exportin and pre-miRNA.

The protein localises to the nucleus. In terms of biological role, GTP-binding protein involved in nucleocytoplasmic transport. Required for the import of protein into the nucleus and also for RNA export. Involved in chromatin condensation and control of cell cycle. The sequence is that of GTP-binding nuclear protein Ran-A1 (RAN-A1) from Nicotiana tabacum (Common tobacco).